Consider the following 473-residue polypeptide: Lysophospholipid acyltransferase 5 (473 aa).

A run of 4 helical transmembrane segments spans residues 20–40 (LLIS…FFYN), 43–63 (AQHQ…FNCG), 66–86 (VIHP…MAGT), and 88–108 (ASIY…YWFH). Residues Asn-315 and His-351 contribute to the active site. 3 consecutive transmembrane segments (helical) span residues 341 to 361 (VITL…FLLF), 396 to 416 (FIWI…FLMF), and 431 to 451 (LYFI…MVLL). The Di-lysine motif motif lies at 470–473 (KKEL).

It belongs to the membrane-bound acyltransferase family.

It localises to the endoplasmic reticulum membrane. The catalysed reaction is a 1-acyl-sn-glycero-3-phosphocholine + an acyl-CoA = a 1,2-diacyl-sn-glycero-3-phosphocholine + CoA. The enzyme catalyses a 1-acyl-sn-glycero-3-phospho-L-serine + an acyl-CoA = a 1,2-diacyl-sn-glycero-3-phospho-L-serine + CoA. It catalyses the reaction a 1-acyl-sn-glycero-3-phosphoethanolamine + an acyl-CoA = a 1,2-diacyl-sn-glycero-3-phosphoethanolamine + CoA. Its pathway is lipid metabolism; phospholipid metabolism. In terms of biological role, probable acyltransferase which may mediate the conversion of lysophosphatidylcholine (1-acyl-sn-glycero-3-phosphocholine or LPC) into phosphatidylcholine (1,2-diacyl-sn-glycero-3-phosphocholine or PC) (LPCAT activity). May also catalyze the conversion of lysophosphatidylethanolamine (1-acyl-2-hydroxy-sn-glycero-3-phosphoethanolamine or LPE) into phosphatidylethanolamine (1,2-diacyl-sn-glycero-3-phosphoethanolamine or PE) (LPEAT activity), as well as the conversion of lysophosphatidylserine (1-acyl-2-hydroxy-sn-glycero-3-phospho-L-serine or LPS) into phosphatidylserine (1,2-diacyl-sn-glycero-3-phospho-L-serine or PS) (LPSAT activity). Required for incorporation of arachidonic acid into PC, PE, and PS. The protein is Lysophospholipid acyltransferase 5 (mboa-6) of Caenorhabditis elegans.